Reading from the N-terminus, the 505-residue chain is Cyanidin 3-O-glucoside 7-O-glucosyltransferase (acyl-glucose) (505 aa).

Positions 1–25 are cleaved as a signal peptide; it reads MCPSFLVTLLLLQLSSLVVVLVVWA. Residues Gln52, His152, and 197–198 each bind a beta-D-glucoside; that span reads NE. Residue Glu198 is the Proton donor of the active site. Cysteines 217 and 225 form a disulfide. 3 N-linked (GlcNAc...) asparagine glycosylation sites follow: Asn224, Asn229, and Asn324. A beta-D-glucoside is bound by residues Tyr341 and Glu403. Glu403 functions as the Nucleophile in the catalytic mechanism. N-linked (GlcNAc...) asparagine glycans are attached at residues Asn411 and Asn437. A beta-D-glucoside-binding residues include Trp447 and Tyr463. N-linked (GlcNAc...) asparagine glycosylation occurs at Asn494.

The protein belongs to the glycosyl hydrolase 1 family.

The protein localises to the vacuole. The catalysed reaction is 1-O-(4-hydroxy-3-methoxybenzoyl)-beta-D-glucose + cyanidin 3-O-beta-D-glucoside = cyanidin 3,7-di-O-beta-D-glucoside + vanillate. The protein operates within pigment biosynthesis; anthocyanin biosynthesis. Beta-glycosidase that catalyzes the transfer of glucose moiety to anthocyanidin 3-glucoside at the 7 position. Anthocyanins are ubiquitous colored pigments that are responsible for variations in petal color. The polypeptide is Cyanidin 3-O-glucoside 7-O-glucosyltransferase (acyl-glucose) (AA7GT) (Delphinium grandiflorum (Siberian larkspur)).